The primary structure comprises 503 residues: Variant surface glycoprotein ILTAT 1.3 (503 aa).

The first 29 residues, 1 to 29, serve as a signal peptide directing secretion; it reads MTKAYENRMLLQALVLAAVLCTTHAEGTA. 2 disulfide bridges follow: Cys42–Cys168 and Cys150–Cys206. N-linked (GlcNAc...) asparagine glycans are attached at residues Asn419 and Asn432. A lipid anchor (GPI-anchor amidated aspartate) is attached at Asp480. Positions 481–503 are cleaved as a propeptide — removed in mature form; sequence SSFILNKQFALSVVSAAFAALLF.

The protein resides in the cell membrane. VSG forms a coat on the surface of the parasite. The trypanosome evades the immune response of the host by expressing a series of antigenically distinct VSGs from an estimated 1000 VSG genes. The chain is Variant surface glycoprotein ILTAT 1.3 from Trypanosoma brucei brucei.